Here is a 354-residue protein sequence, read N- to C-terminus: Lysophosphatidic acid receptor 3 (354 aa).

Residues Met1 to Val31 are Extracellular-facing. N-linked (GlcNAc...) asparagine glycosylation occurs at Asn15. Residues Ile32–Ile52 traverse the membrane as a helical segment. The Cytoplasmic segment spans residues Ala53–Tyr67. A helical transmembrane segment spans residues Leu68–Phe88. The Extracellular portion of the chain corresponds to Asn89–Arg101. The helical transmembrane segment at Trp102–Ala124 threads the bilayer. Over Val125–Thr146 the chain is Cytoplasmic. The helical transmembrane segment at Leu147–Trp167 threads the bilayer. The Extracellular segment spans residues Asn168 to Ser186. An N-linked (GlcNAc...) asparagine glycan is attached at Asn172. The helical transmembrane segment at Tyr187 to Val207 threads the bilayer. Topologically, residues Arg208 to Thr240 are cytoplasmic. A helical transmembrane segment spans residues Val241 to Leu261. The Extracellular portion of the chain corresponds to Asp262–Arg276. The helical transmembrane segment at Trp277 to Tyr295 threads the bilayer. Residues Lys296 to Ser354 lie on the Cytoplasmic side of the membrane. A lipid anchor (S-palmitoyl cysteine) is attached at Cys309.

This sequence belongs to the G-protein coupled receptor 1 family.

Its subcellular location is the cell membrane. In terms of biological role, receptor for lysophosphatidic acid (LPA), a mediator of diverse cellular activities. Seems to be coupled to the G(i)/G(o) and G(q) families of heteromeric G proteins. In Rattus norvegicus (Rat), this protein is Lysophosphatidic acid receptor 3 (Lpar3).